Here is a 362-residue protein sequence, read N- to C-terminus: 3-dehydroquinate synthase (362 aa).

Residues 72–77, 106–110, 130–131, lysine 143, and lysine 152 contribute to the NAD(+) site; these read DGEAHK, GVIGD, and TT. The Zn(2+) site is built by glutamate 185, histidine 248, and histidine 265.

Belongs to the sugar phosphate cyclases superfamily. Dehydroquinate synthase family. Co(2+) is required as a cofactor. Zn(2+) serves as cofactor. Requires NAD(+) as cofactor.

It is found in the cytoplasm. The catalysed reaction is 7-phospho-2-dehydro-3-deoxy-D-arabino-heptonate = 3-dehydroquinate + phosphate. It functions in the pathway metabolic intermediate biosynthesis; chorismate biosynthesis; chorismate from D-erythrose 4-phosphate and phosphoenolpyruvate: step 2/7. Catalyzes the conversion of 3-deoxy-D-arabino-heptulosonate 7-phosphate (DAHP) to dehydroquinate (DHQ). The protein is 3-dehydroquinate synthase of Laribacter hongkongensis (strain HLHK9).